The following is a 150-amino-acid chain: Protein SprT-like (150 aa).

The SprT-like domain maps to 6 to 147 (LQKLTEDISE…CGKCRGKIKR (142 aa)). His67 lines the Zn(2+) pocket. Glu68 is a catalytic residue. Residue His71 coordinates Zn(2+).

This sequence belongs to the SprT family. Requires Zn(2+) as cofactor.

It is found in the cytoplasm. The sequence is that of Protein SprT-like (ydcK) from Bacillus subtilis (strain 168).